We begin with the raw amino-acid sequence, 333 residues long: tRNA(Ile)-lysidine synthase (333 aa).

33-38 (SGGADS) serves as a coordination point for ATP.

It belongs to the tRNA(Ile)-lysidine synthase family.

It localises to the cytoplasm. It catalyses the reaction cytidine(34) in tRNA(Ile2) + L-lysine + ATP = lysidine(34) in tRNA(Ile2) + AMP + diphosphate + H(+). In terms of biological role, ligates lysine onto the cytidine present at position 34 of the AUA codon-specific tRNA(Ile) that contains the anticodon CAU, in an ATP-dependent manner. Cytidine is converted to lysidine, thus changing the amino acid specificity of the tRNA from methionine to isoleucine. The protein is tRNA(Ile)-lysidine synthase of Salinispora tropica (strain ATCC BAA-916 / DSM 44818 / JCM 13857 / NBRC 105044 / CNB-440).